Reading from the N-terminus, the 394-residue chain is Phosphopentomutase (394 aa).

Positions 14, 287, 292, 328, 329, and 340 each coordinate Mn(2+).

The protein belongs to the phosphopentomutase family. Mn(2+) is required as a cofactor.

The protein resides in the cytoplasm. It carries out the reaction 2-deoxy-alpha-D-ribose 1-phosphate = 2-deoxy-D-ribose 5-phosphate. It catalyses the reaction alpha-D-ribose 1-phosphate = D-ribose 5-phosphate. It functions in the pathway carbohydrate degradation; 2-deoxy-D-ribose 1-phosphate degradation; D-glyceraldehyde 3-phosphate and acetaldehyde from 2-deoxy-alpha-D-ribose 1-phosphate: step 1/2. Functionally, isomerase that catalyzes the conversion of deoxy-ribose 1-phosphate (dRib-1-P) and ribose 1-phosphate (Rib-1-P) to deoxy-ribose 5-phosphate (dRib-5-P) and ribose 5-phosphate (Rib-5-P), respectively. The chain is Phosphopentomutase from Listeria welshimeri serovar 6b (strain ATCC 35897 / DSM 20650 / CCUG 15529 / CIP 8149 / NCTC 11857 / SLCC 5334 / V8).